The primary structure comprises 82 residues: U17-hexatoxin-Hi1a (82 aa).

An N-terminal signal peptide occupies residues 1-21; the sequence is MKTIFAVTLLLFAIYVPECMP. 5 cysteine pairs are disulfide-bonded: C22–C33, C27–C48, C32–C61, C58–C69, and C63–C75.

Expressed by the venom gland.

It localises to the secreted. In terms of biological role, probable ion channel inhibitor. The sequence is that of U17-hexatoxin-Hi1a from Hadronyche infensa (Fraser island funnel-web spider).